Consider the following 185-residue polypeptide: UPF0301 protein MS0260 (185 aa).

It belongs to the UPF0301 (AlgH) family.

This Mannheimia succiniciproducens (strain KCTC 0769BP / MBEL55E) protein is UPF0301 protein MS0260.